The primary structure comprises 78 residues: D-alanyl carrier protein (78 aa).

The Carrier domain maps to 1–78 (MAFRENVLEI…MIITQLEALK (78 aa)). S36 bears the O-(pantetheine 4'-phosphoryl)serine mark.

It belongs to the DltC family. Post-translationally, 4'-phosphopantetheine is transferred from CoA to a specific serine of apo-DCP.

The protein resides in the cytoplasm. Its pathway is cell wall biogenesis; lipoteichoic acid biosynthesis. Its function is as follows. Carrier protein involved in the D-alanylation of lipoteichoic acid (LTA). The loading of thioester-linked D-alanine onto DltC is catalyzed by D-alanine--D-alanyl carrier protein ligase DltA. The DltC-carried D-alanyl group is further transferred to cell membrane phosphatidylglycerol (PG) by forming an ester bond, probably catalyzed by DltD. D-alanylation of LTA plays an important role in modulating the properties of the cell wall in Gram-positive bacteria, influencing the net charge of the cell wall. This chain is D-alanyl carrier protein, found in Listeria welshimeri serovar 6b (strain ATCC 35897 / DSM 20650 / CCUG 15529 / CIP 8149 / NCTC 11857 / SLCC 5334 / V8).